Consider the following 264-residue polypeptide: tRNA pseudouridine synthase A (264 aa).

Catalysis depends on Asp-54, which acts as the Nucleophile. Tyr-113 is a substrate binding site.

It belongs to the tRNA pseudouridine synthase TruA family. Homodimer.

The enzyme catalyses uridine(38/39/40) in tRNA = pseudouridine(38/39/40) in tRNA. Formation of pseudouridine at positions 38, 39 and 40 in the anticodon stem and loop of transfer RNAs. The protein is tRNA pseudouridine synthase A of Leptospira biflexa serovar Patoc (strain Patoc 1 / Ames).